The primary structure comprises 122 residues: MIQHESRLKVADNSGARELLVIKILGGSKRKTGNIGDIVVAAVKQATPGGVVKKGDVVKAVIVRTKSGARREDGSYIKFDENAAVVINADKSPRGTRIFGPVARELREHDFMKIVSLAPEVL.

It belongs to the universal ribosomal protein uL14 family. As to quaternary structure, part of the 50S ribosomal subunit. Forms a cluster with proteins L3 and L19. In the 70S ribosome, L14 and L19 interact and together make contacts with the 16S rRNA in bridges B5 and B8.

Its function is as follows. Binds to 23S rRNA. Forms part of two intersubunit bridges in the 70S ribosome. In Lactobacillus gasseri (strain ATCC 33323 / DSM 20243 / BCRC 14619 / CIP 102991 / JCM 1131 / KCTC 3163 / NCIMB 11718 / NCTC 13722 / AM63), this protein is Large ribosomal subunit protein uL14.